Consider the following 342-residue polypeptide: Heat-inducible transcription repressor HrcA (342 aa).

This sequence belongs to the HrcA family.

Its function is as follows. Negative regulator of class I heat shock genes (grpE-dnaK-dnaJ and groELS operons). Prevents heat-shock induction of these operons. The polypeptide is Heat-inducible transcription repressor HrcA (Oceanobacillus iheyensis (strain DSM 14371 / CIP 107618 / JCM 11309 / KCTC 3954 / HTE831)).